A 310-amino-acid polypeptide reads, in one-letter code: Thioredoxin reductase (310 aa).

E35–Q42 serves as a coordination point for FAD. C134 and C137 are oxidised to a cystine. D277–I286 contacts FAD.

This sequence belongs to the class-II pyridine nucleotide-disulfide oxidoreductase family. Homodimer. FAD serves as cofactor.

It is found in the cytoplasm. The catalysed reaction is [thioredoxin]-dithiol + NADP(+) = [thioredoxin]-disulfide + NADPH + H(+). The polypeptide is Thioredoxin reductase (trxB) (Staphylococcus epidermidis (strain ATCC 35984 / DSM 28319 / BCRC 17069 / CCUG 31568 / BM 3577 / RP62A)).